A 78-amino-acid chain; its full sequence is Conotoxin ba1890.8 (78 aa).

The first 22 residues, 1–22 (MKTSGRLLFLCLAVGLLLESQA), serve as a signal peptide directing secretion. A propeptide spanning residues 23–61 (HPIADAEDATRNVGSDGTSVELSEILERGQDSSAEKGQR) is cleaved from the precursor. The segment at 25–78 (IADAEDATRNVGSDGTSVELSEILERGQDSSAEKGQRQNDHDVDESGHDIPFPS) is disordered. Positions 34-43 (NVGSDGTSVE) are enriched in polar residues. Basic and acidic residues predominate over residues 47-72 (ILERGQDSSAEKGQRQNDHDVDESGH). Gln-62 carries the pyrrolidone carboxylic acid modification.

This sequence belongs to the conotoxin H superfamily. In terms of tissue distribution, expressed by the venom duct.

It localises to the secreted. Probable toxin. In Conus bayani (Bayan's cone), this protein is Conotoxin ba1890.8.